Reading from the N-terminus, the 550-residue chain is Chaperonin GroEL (550 aa).

Residues 30–33 (TLGP), Lys51, 87–91 (DGTTT), Gly415, and Asp497 each bind ATP.

Belongs to the chaperonin (HSP60) family. As to quaternary structure, forms a cylinder of 14 subunits composed of two heptameric rings stacked back-to-back. Interacts with the co-chaperonin GroES.

It localises to the cytoplasm. It catalyses the reaction ATP + H2O + a folded polypeptide = ADP + phosphate + an unfolded polypeptide.. Functionally, together with its co-chaperonin GroES, plays an essential role in assisting protein folding. The GroEL-GroES system forms a nano-cage that allows encapsulation of the non-native substrate proteins and provides a physical environment optimized to promote and accelerate protein folding. The sequence is that of Chaperonin GroEL from Yersinia enterocolitica.